A 27-amino-acid chain; its full sequence is Protamine-A (27 aa).

Residues 1 to 27 (ARRRRRHASTKLKRRRRRRRHGKKSHK) are disordered.

In terms of tissue distribution, testis.

The protein localises to the nucleus. It is found in the chromosome. In terms of biological role, protamines substitute for histones in the chromatin of sperm during the haploid phase of spermatogenesis. They compact sperm DNA into a highly condensed, stable and inactive complex. This chain is Protamine-A, found in Acipenser stellatus (Sevruga).